We begin with the raw amino-acid sequence, 37 residues long: Neuropeptide Y1-like conopeptide (37 aa).

Phe-37 bears the Phenylalanine amide mark.

Belongs to the NPY family. In terms of tissue distribution, expressed by the venom duct.

The protein resides in the secreted. In terms of biological role, causes hyperactivity such as jumping, rapid circling and tail flicking, when intraventricularly injected into mice brain. The sequence is that of Neuropeptide Y1-like conopeptide from Conus betulinus (Beech cone).